The primary structure comprises 520 residues: 1,4-alpha-glucan branching enzyme TTHA1902 (520 aa).

Catalysis depends on E184, which acts as the Nucleophile. Positions 265 and 282 each coordinate substrate. The active-site Proton donor is D353. Residues W404, D460, and Q469 each contribute to the substrate site.

It belongs to the glycosyl hydrolase 57 family.

It carries out the reaction Transfers a segment of a (1-&gt;4)-alpha-D-glucan chain to a primary hydroxy group in a similar glucan chain.. It functions in the pathway glycan biosynthesis; glycogen biosynthesis. Its function is as follows. Catalyzes the formation of branch points in alpha-glucans by cleavage of an alpha-1,4 glycosidic bond and subsequent transfer of the cleaved-off oligosaccharide to a new alpha-1,6 position. The branch chain-length distribution of the reaction products shows degree of polymerization (DP) of 3 to 13, with two local maxima at DP 7 and DP 11. Exhibits an alpha-retaining catalytic mechanism. Is involved in glycogen biosynthesis. Shows a secondary activity, i.e. the hydrolysis of the substrate, being 4% of the total activity. Can use amylose as substrate but not alpha-1,4-linked oligosaccharides of 2-7 glucose residues, beta-cyclodextrin, 6-O-glucosyl-beta-cyclodextrin and 6-O-maltosyl-beta-cyclodextrin. Is not able to branch amylopectin further, it only hydrolyzes amylopectin. Thus, displays preference for linear and long substrates (amylose) over branched structures (amylopectin). The chain is 1,4-alpha-glucan branching enzyme TTHA1902 from Thermus thermophilus (strain ATCC 27634 / DSM 579 / HB8).